The chain runs to 70 residues: MKKDIHPKYEEITASCSCGNVMKIRSTVGHDLNLDVCSKCHPFFTGKQRDVATGGRVDRFNKRFNIPGSK.

Lysine 8 is subject to N6-acetyllysine. Zn(2+)-binding residues include cysteine 16, cysteine 18, cysteine 37, and cysteine 40.

It belongs to the bacterial ribosomal protein bL31 family. Type A subfamily. Part of the 50S ribosomal subunit. Zn(2+) is required as a cofactor.

Its function is as follows. Binds the 23S rRNA. The protein is Large ribosomal subunit protein bL31 of Escherichia coli O6:K15:H31 (strain 536 / UPEC).